The chain runs to 673 residues: DNA ligase (673 aa).

NAD(+) is bound at residue 34–38 (DAAFD). Residues 54–73 (LRRPDSPTQRVGGATAPDFA) are disordered. NAD(+)-binding positions include 83 to 84 (SL) and Glu-114. Lys-116 serves as the catalytic N6-AMP-lysine intermediate. NAD(+) contacts are provided by Arg-137, Glu-176, Lys-292, and Lys-316. The Zn(2+) site is built by Cys-410, Cys-413, Cys-428, and Cys-433. The BRCT domain occupies 594–673 (PAEGPLAGMT…DEFCERYLQG (80 aa)).

This sequence belongs to the NAD-dependent DNA ligase family. LigA subfamily. Mg(2+) serves as cofactor. Requires Mn(2+) as cofactor.

It carries out the reaction NAD(+) + (deoxyribonucleotide)n-3'-hydroxyl + 5'-phospho-(deoxyribonucleotide)m = (deoxyribonucleotide)n+m + AMP + beta-nicotinamide D-nucleotide.. In terms of biological role, DNA ligase that catalyzes the formation of phosphodiester linkages between 5'-phosphoryl and 3'-hydroxyl groups in double-stranded DNA using NAD as a coenzyme and as the energy source for the reaction. It is essential for DNA replication and repair of damaged DNA. The sequence is that of DNA ligase from Symbiobacterium thermophilum (strain DSM 24528 / JCM 14929 / IAM 14863 / T).